The sequence spans 174 residues: MRKEDCFYLGKIAKKFSFKGEVLVYLDTDEPEMYEDLESVFVEVNKNLVPFFIENSNLHKADFLRVRFEDVDNEEEADAIMNCEVYLPLKMLPKLTGNKFYFHEVIGFEIEDKRVGVFGKIVSINDTTAQPLFEVLNGEVEMLIPMIDHFIVKIDRENKKVVMDLPEGLVEMYL.

Residues 97–169 (GNKFYFHEVI…KVVMDLPEGL (73 aa)) form the PRC barrel domain.

It belongs to the RimM family. In terms of assembly, binds ribosomal protein uS19.

The protein localises to the cytoplasm. In terms of biological role, an accessory protein needed during the final step in the assembly of 30S ribosomal subunit, possibly for assembly of the head region. Essential for efficient processing of 16S rRNA. May be needed both before and after RbfA during the maturation of 16S rRNA. It has affinity for free ribosomal 30S subunits but not for 70S ribosomes. The protein is Ribosome maturation factor RimM of Flavobacterium psychrophilum (strain ATCC 49511 / DSM 21280 / CIP 103535 / JIP02/86).